A 699-amino-acid chain; its full sequence is TBC1 domain family member 23 (699 aa).

In terms of domain architecture, Rab-GAP TBC spans 44–225 (PLPADLRAKV…AIWDGYLQQA (182 aa)). S300 carries the phosphoserine modification. The Rhodanese domain occupies 334–446 (EGVRFFVVDC…LQQHLADINV (113 aa)). Residues 459 to 479 (STSGSRSSINSVDGESPNGSS) show a composition bias toward polar residues. The tract at residues 459-483 (STSGSRSSINSVDGESPNGSSDRGM) is disordered. 3 positions are modified to phosphoserine: S469, S474, and S507. Phosphothreonine is present on T514. Residues 514–573 (TPVDRMSFNLPWPDRSCTERHVSSSDRVGKPYRGVKPVFSIGDEEEYDTDEIDSSSMSDD) are may mediate the interaction with C17orf75, FAM91A1 and WDR11. The segment at 514–699 (TPVDRMSFNL…IMKVLDALES (186 aa)) is may mediate the interaction with WASHC1. 2 positions are modified to phosphoserine: S520 and S571. The tract at residues 574-699 (DRKEVVNIQT…IMKVLDALES (126 aa)) is may mediate the interaction with FKBP15 and WASHC2; required for endosome to Golgi trafficking.

As to quaternary structure, directly interacts with GOLGA1 and GOLGA4. Interacts with FAM91A1, C17ORF75 and WDR11; the interaction recruits TBC1D23 to AP-1-derived vesicles. Directly interacts with WASHC1 and WASHC2A/FAM21A. Interacts with FKBP15. Isoform 1: Widely expressed, including in fetal adult brain (corpus callosum, pons, cerebellum), spinal cord, heart, skeletal muscle, thymus and bone marrow, and at lower levels in spleen. Hardly detected in liver, kidney, colon and testis. Isoform 2: Expressed at high levels in liver, kidney, colon and testis. Hardly detected in tissues expressing high levels of isoform 1. Expressed at low levels in spleen.

It is found in the golgi apparatus. The protein resides in the trans-Golgi network. Its subcellular location is the cytoplasmic vesicle. Functionally, putative Rab GTPase-activating protein which plays a role in vesicular trafficking. Involved in endosome-to-Golgi trafficking. Acts as a bridging protein by binding simultaneously to golgins, including GOLGA1 and GOLGA4, located at the trans-Golgi, and to the WASH complex, located on endosome-derived vesicles. Together with WDR11 complex facilitates the golgin-mediated capture of vesicles generated using AP-1. Plays a role in brain development, including in cortical neuron positioning. May also be important for neurite outgrowth, possibly through its involvement in membrane trafficking and cargo delivery, 2 processes that are essential for axonal and dendritic growth. May act as a general inhibitor of innate immunity signaling, strongly inhibiting multiple TLR and dectin/CLEC7A-signaling pathways. Does not alter initial activation events, but instead affects maintenance of inflammatory gene expression several hours after bacterial lipopolysaccharide (LPS) challenge. The polypeptide is TBC1 domain family member 23 (TBC1D23) (Homo sapiens (Human)).